Consider the following 136-residue polypeptide: Protein NrdI (136 aa).

This sequence belongs to the NrdI family.

In terms of biological role, probably involved in ribonucleotide reductase function. The chain is Protein NrdI from Salmonella typhi.